The following is a 325-amino-acid chain: Reticulocalbin-1 (325 aa).

Positions 1–23 (MARGGRLGLALGLLLALVLALRA) are cleaved as a signal peptide. Asparagine 47 carries an N-linked (GlcNAc...) asparagine; partial glycan. Phosphoserine is present on residues serine 49 and serine 74. EF-hand domains are found at residues 73-108 (ESKE…VQKR), 109-144 (YIYD…YYLG), 160-195 (KMLP…EEFE), 197-232 (MKEI…HEDN), 238-273 (WVLS…QDYD), and 274-309 (HAQA…FVGS). 28 residues coordinate Ca(2+): aspartate 86, aspartate 88, aspartate 90, glutamate 97, aspartate 122, aspartate 124, aspartate 126, lysine 128, glutamate 133, aspartate 173, aspartate 175, aspartate 177, threonine 179, glutamate 184, aspartate 210, asparagine 212, aspartate 214, glutamate 221, aspartate 251, asparagine 253, aspartate 255, lysine 257, glutamate 262, aspartate 287, asparagine 289, aspartate 291, methionine 293, and glutamate 298. The short motif at 322–325 (HDEL) is the Prevents secretion from ER element.

This sequence belongs to the CREC family. Post-translationally, O-glycosylated. O-mannosylated by POMT1 and POMT2 and elongated by POMGNT1.

The protein localises to the endoplasmic reticulum lumen. May regulate calcium-dependent activities in the endoplasmic reticulum lumen or post-ER compartment. This chain is Reticulocalbin-1 (Rcn1), found in Mus musculus (Mouse).